The chain runs to 95 residues: Aspartyl/glutamyl-tRNA(Asn/Gln) amidotransferase subunit C (95 aa).

The protein belongs to the GatC family. Heterotrimer of A, B and C subunits.

The catalysed reaction is L-glutamyl-tRNA(Gln) + L-glutamine + ATP + H2O = L-glutaminyl-tRNA(Gln) + L-glutamate + ADP + phosphate + H(+). The enzyme catalyses L-aspartyl-tRNA(Asn) + L-glutamine + ATP + H2O = L-asparaginyl-tRNA(Asn) + L-glutamate + ADP + phosphate + 2 H(+). Functionally, allows the formation of correctly charged Asn-tRNA(Asn) or Gln-tRNA(Gln) through the transamidation of misacylated Asp-tRNA(Asn) or Glu-tRNA(Gln) in organisms which lack either or both of asparaginyl-tRNA or glutaminyl-tRNA synthetases. The reaction takes place in the presence of glutamine and ATP through an activated phospho-Asp-tRNA(Asn) or phospho-Glu-tRNA(Gln). The sequence is that of Aspartyl/glutamyl-tRNA(Asn/Gln) amidotransferase subunit C from Dinoroseobacter shibae (strain DSM 16493 / NCIMB 14021 / DFL 12).